A 585-amino-acid chain; its full sequence is Adenine deaminase (585 aa).

Belongs to the metallo-dependent hydrolases superfamily. Adenine deaminase family. Mn(2+) is required as a cofactor.

The enzyme catalyses adenine + H2O + H(+) = hypoxanthine + NH4(+). This is Adenine deaminase from Halalkalibacterium halodurans (strain ATCC BAA-125 / DSM 18197 / FERM 7344 / JCM 9153 / C-125) (Bacillus halodurans).